A 100-amino-acid polypeptide reads, in one-letter code: Replication restart protein PriB (100 aa).

Residues 4-99 (TNLVSLAALI…LRIQNIKEYK (96 aa)) form the SSB domain.

This sequence belongs to the PriB family. As to quaternary structure, homodimer. Component of the replication restart primosome. Primosome assembly occurs via a 'hand-off' mechanism. PriA binds to replication forks, subsequently PriB then DnaT bind; DnaT then displaces ssDNA to generate the helicase loading substrate. Interacts with PriA with high affinity, independent of DNA presence.

Its activity is regulated as follows. PriA:PriB complex-catalyzed duplex DNA winding is inhibited by CGS 15943 (CHEBI:131351); PriA is the drug target. Stimulates the DNA unwinding activity of PriA helicase, which does not seem to require single-stranded (ss)DNA-binding by PriB. Activates DNA-dependent ATP hydrolysis catalyzed by PriA. Weakly binds ssDNA. Weakly binds double-stranded (ds)DNA, a partial duplex DNA with a 3' ssDNA overhang, and a forked DNA structure with fully duplex leading and lagging strand arms in vitro. In terms of biological role, involved in the restart of stalled replication forks, which reloads the replicative helicase on sites other than the origin of replication; the PriA-PriB pathway is the major replication restart pathway. During primosome assembly it facilitates complex formation between PriA and DnaT on DNA; stabilizes PriA on DNA. Stimulates the DNA unwinding activity of PriA helicase. The protein is Replication restart protein PriB of Neisseria gonorrhoeae (strain ATCC 700825 / FA 1090).